The primary structure comprises 358 residues: tRNA-specific 2-thiouridylase MnmA (358 aa).

Residues 8–15 (GMSGGVDS) and Met34 each bind ATP. The Nucleophile role is filled by Cys103. Cys103 and Cys199 are joined by a disulfide. Residue Gly127 participates in ATP binding. The interval 149 to 151 (KDQ) is interaction with tRNA. Catalysis depends on Cys199, which acts as the Cysteine persulfide intermediate. The interval 305–306 (RY) is interaction with tRNA.

This sequence belongs to the MnmA/TRMU family.

The protein localises to the cytoplasm. The catalysed reaction is S-sulfanyl-L-cysteinyl-[protein] + uridine(34) in tRNA + AH2 + ATP = 2-thiouridine(34) in tRNA + L-cysteinyl-[protein] + A + AMP + diphosphate + H(+). Its function is as follows. Catalyzes the 2-thiolation of uridine at the wobble position (U34) of tRNA, leading to the formation of s(2)U34. The chain is tRNA-specific 2-thiouridylase MnmA from Clostridium beijerinckii (strain ATCC 51743 / NCIMB 8052) (Clostridium acetobutylicum).